The primary structure comprises 141 residues: HTH-type transcriptional repressor NsrR (141 aa).

The HTH rrf2-type domain occupies 2–129 (QLTSFTDYGL…DNYTLADLVE (128 aa)). The H-T-H motif DNA-binding region spans 28-51 (ISEVTEVYGVSRNHMVKIINQLSR). Residues C91, C96, and C102 each coordinate [2Fe-2S] cluster.

[2Fe-2S] cluster serves as cofactor.

Its function is as follows. Nitric oxide-sensitive repressor of genes involved in protecting the cell against nitrosative stress. May require iron for activity. The protein is HTH-type transcriptional repressor NsrR of Klebsiella pneumoniae subsp. pneumoniae (strain ATCC 700721 / MGH 78578).